The primary structure comprises 387 residues: Homoserine O-succinyltransferase (387 aa).

The AB hydrolase-1 domain occupies 45–354 (NAVLVCHALN…DAPHGHDAFL (310 aa)). Residue serine 151 is the Nucleophile of the active site. Arginine 221 provides a ligand contact to substrate. Active-site residues include aspartate 317 and histidine 350. Aspartate 351 lines the substrate pocket.

Belongs to the AB hydrolase superfamily. MetX family. As to quaternary structure, homodimer.

The protein localises to the cytoplasm. It carries out the reaction L-homoserine + succinyl-CoA = O-succinyl-L-homoserine + CoA. It participates in amino-acid biosynthesis; L-methionine biosynthesis via de novo pathway; O-succinyl-L-homoserine from L-homoserine: step 1/1. Transfers a succinyl group from succinyl-CoA to L-homoserine, forming succinyl-L-homoserine. The chain is Homoserine O-succinyltransferase from Methylibium petroleiphilum (strain ATCC BAA-1232 / LMG 22953 / PM1).